The primary structure comprises 162 residues: Protein NrdI (162 aa).

It belongs to the NrdI family.

Probably involved in ribonucleotide reductase function. In Streptococcus pyogenes serotype M3 (strain ATCC BAA-595 / MGAS315), this protein is Protein NrdI.